The primary structure comprises 238 residues: uncharacterized protein (238 aa).

Residues 10 to 33 traverse the membrane as a helical segment; sequence TLLALMISLSLSSLLLLSISHFYV.

The protein resides in the membrane. This is an uncharacterized protein from Haemophilus influenzae (strain ATCC 51907 / DSM 11121 / KW20 / Rd).